The following is a 126-amino-acid chain: Glycine cleavage system H protein (126 aa).

Residues D19–E100 enclose the Lipoyl-binding domain. K60 is subject to N6-lipoyllysine.

This sequence belongs to the GcvH family. In terms of assembly, the glycine cleavage system is composed of four proteins: P, T, L and H. The cofactor is (R)-lipoate.

The glycine cleavage system catalyzes the degradation of glycine. The H protein shuttles the methylamine group of glycine from the P protein to the T protein. This chain is Glycine cleavage system H protein, found in Koribacter versatilis (strain Ellin345).